The primary structure comprises 485 residues: uncharacterized protein (485 aa).

Residues 151–201 (IKAPTNNSQSGDGNGGTNNDNLLGTFDIREKSNGKKGESNGKQGNGQDKKT) are disordered. A compositionally biased stretch (low complexity) spans 155-174 (TNNSQSGDGNGGTNNDNLLG). Residues 177-189 (DIREKSNGKKGES) show a composition bias toward basic and acidic residues.

It belongs to the MG185/MG260 family.

This is an uncharacterized protein from Mycoplasma pneumoniae (strain ATCC 29342 / M129 / Subtype 1) (Mycoplasmoides pneumoniae).